Here is a 513-residue protein sequence, read N- to C-terminus: Histone acetyltransferase KAT5 (513 aa).

Residues 8 to 65 (IEGCRLPVLRRNQDNEDEWPLAEILSVKDISGRKLFYVHYIDFNKRLDEWVTHERLDL) enclose the Tudor-knot domain. Lys52 is subject to N6-acetyllysine. Positions 69-106 (QFPKKEAKTPTKNGLPGSRPGSPEREVPASAQASGKTL) are disordered. Ser86 bears the Phosphoserine mark. The residue at position 90 (Ser90) is a Phosphoserine; by CDK1 and CDK9. N6-acetyllysine; by autocatalysis occurs at positions 104 and 120. Residues 122 to 217 (REAIPGGEPD…SAPRMTGSLV (96 aa)) form a disordered region. Polar residues predominate over residues 133–144 (PLSSSSCLQPNH). An N6-acetyllysine; by autocatalysis mark is found at Lys148, Lys150, Lys187, and Lys189. Ser199 carries the post-translational modification Phosphoserine. In terms of domain architecture, MYST-type HAT spans 227 to 504 (TRMKNIECIE…IDSKCLHFTP (278 aa)). The C2HC MYST-type zinc finger occupies 260–285 (LYLCEFCLKYGRSLKCLQRHLTKCDL). Lys327 carries the N6-acetyllysine; by autocatalysis modification. Positions 368 to 513 (ACILTLPPYQ…PKDWSKRGKW (146 aa)) are interaction with ATF2. Residues 370 to 372 (ILT) and 377 to 383 (QRRGYGK) contribute to the acetyl-CoA site. Glu403 acts as the Proton donor/acceptor in catalysis. Residues Ser407 and Ser416 each contribute to the acetyl-CoA site. A Glycyl lysine isopeptide (Lys-Gly) (interchain with G-Cter in SUMO1); alternate cross-link involves residue Lys430. Residue Lys430 forms a Glycyl lysine isopeptide (Lys-Gly) (interchain with G-Cter in SUMO2); alternate linkage. A Glycyl lysine isopeptide (Lys-Gly) (interchain with G-Cter in SUMO1) cross-link involves residue Lys451.

It belongs to the MYST (SAS/MOZ) family. As to quaternary structure, component of the NuA4 histone acetyltransferase complex which contains the catalytic subunit KAT5/TIP60 and the subunits EP400, TRRAP/PAF400, BRD8/SMAP, EPC1, DMAP1/DNMAP1, RUVBL1/TIP49, RUVBL2, ING3, actin, ACTL6A/BAF53A, MORF4L1/MRG15, MORF4L2/MRGX, MRGBP, YEATS4/GAS41, VPS72/YL1 and MEAF6. KAT5/TIP60, EPC1, and ING3 together constitute a minimal HAT complex termed Piccolo NuA4. The NuA4 complex interacts with MYC. Interacts with ATM. Interacts with JADE1. Interacts with PLA2G4A/CPLA2, EDNRA and HDAC7. Interacts with the cytoplasmic tail of APP and APBB1/FE65. Interacts with TRIM24 and TRIM68. Forms a complex with SENP6 and UBE2I in response to UV irradiation. Identified in a complex with HINT1. Interacts with ATF2 and CUL3. Interacts with NR1D2 (via N-terminus). Component of a SWR1-like complex. Interacts with FOXP3. Interacts with ZBTB49. Interacts with SRF. Interacts with ATF3; promoting autoacetylation and deubiquitination by USP7. Interacts with EP300/p300; interaction promotes KAT5 autoacetylation. Interacts with PRKDC; interaction is impaired following KAT5 sumoylation. Interacts with GPR50. Interacts with NME3; this interaction enables recruitment of NME3 at DNA damage sites where it plays a role in the repair of DNA. Phosphorylated on Ser-86 and Ser-90; enhanced during G2/M phase. The phosphorylated form has a higher activity. Phosphorylation at Ser-90 by CDK1 or CDK9 is a prerequisite for phosphorylation at Ser-86 by GSK3. Phosphorylation at Ser-86 by GSK3 (GSK3A or GSK3B) activates acetyltransferase and acyltransferase activity. Phosphorylation at Ser-90 by CDK9 promotes KAT5 recruitment to chromatin. Phosphorylation by VRK1 following DNA damage promotes KAT5 association with chromatin and histone acetyltransferase activity. Post-translationally, autoacetylated. Autoacetylation is required for histone acetyltransferase activity. Autoacetylation at Lys-327 is facilitated by interaction with EP300/p300: it prevents ubiquitination and subsequent degradation by the proteasome and promotes acetylation of target proteins. Deacetylated by HDAC3 and SIRT1. Deacetylation by HDAC3 promotes its ubiquitination and cytoplasmic localization. In terms of processing, sumoylated by UBE2I at Lys-430 and Lys-451, leading to increase of its histone acetyltransferase activity in UV-induced DNA damage response, as well as its translocation to nuclear bodies. Sumoylation with SUMO2 by PIAS4 at Lys-430 promotes repair of DNA double-strand breaks (DSBs) via homologous recombination (HR). Sumoylation by PIAS4 impairs interaction with PRKDC, inhibiting non-homologous end joining (NHEJ)-mediated repair of DSBs, thereby facilitating HR. Desumoylated by SENP3. Ubiquitinated by MDM2, leading to its proteasome-dependent degradation. Ubiquitination is prevented by autoacetylation at Lys-327. Ubiquitinated following deacetylation by HDAC3, leading to cytoplasmic localization. Deubiquitinated by USP7 following interaction with ATF3, promoting its stabilization. In terms of tissue distribution, expressed in testis, heart, brain, kidney and liver. Weakly expressed in lung.

Its subcellular location is the nucleus. The protein resides in the chromosome. It localises to the cytoplasm. It is found in the centromere. The protein localises to the kinetochore. Its subcellular location is the cytoskeleton. The protein resides in the spindle pole. It localises to the nucleolus. It is found in the perinuclear region. It catalyses the reaction L-lysyl-[histone] + acetyl-CoA = N(6)-acetyl-L-lysyl-[histone] + CoA + H(+). It carries out the reaction L-lysyl-[protein] + acetyl-CoA = N(6)-acetyl-L-lysyl-[protein] + CoA + H(+). The catalysed reaction is (2E)-butenoyl-CoA + L-lysyl-[protein] = N(6)-(2E)-butenoyl-L-lysyl-[protein] + CoA + H(+). The enzyme catalyses 2-hydroxyisobutanoyl-CoA + L-lysyl-[protein] = N(6)-(2-hydroxyisobutanoyl)-L-lysyl-[protein] + CoA + H(+). It catalyses the reaction (S)-lactoyl-CoA + L-lysyl-[protein] = N(6)-[(S)-lactoyl]-L-lysyl-[protein] + CoA + H(+). Its activity is regulated as follows. Acyltransferase and acetyltransferase activities are activated by phosphorylation and autoacetylation. Autoacetylation activates the histone acetyltransferase activity. Catalytic subunit of the NuA4 histone acetyltransferase complex, a multiprotein complex involved in transcriptional activation of select genes principally by acetylation of nucleosomal histones H2A and H4. Histone acetylation alters nucleosome-DNA interactions and promotes interaction of the modified histones with other proteins which positively regulate transcription. The NuA4 histone acetyltransferase complex is required for the activation of transcriptional programs associated with proto-oncogene mediated growth induction, tumor suppressor mediated growth arrest and replicative senescence, apoptosis, and DNA repair. The NuA4 complex plays a direct role in repair of DNA double-strand breaks (DSBs) by promoting homologous recombination (HR): the complex inhibits TP53BP1 binding to chromatin via MBTD1, which recognizes and binds histone H4 trimethylated at 'Lys-20' (H4K20me), and KAT5 that catalyzes acetylation of 'Lys-15' of histone H2A (H2AK15ac), thereby blocking the ubiquitination mark required for TP53BP1 localization at DNA breaks. Also involved in DSB repair by mediating acetylation of 'Lys-5' of histone H2AX (H2AXK5ac), promoting NBN/NBS1 assembly at the sites of DNA damage. The NuA4 complex plays a key role in hematopoietic stem cell maintenance and is required to maintain acetylated H2A.Z/H2AZ1 at MYC target genes. The NuA4 complex is also required for spermatid development by promoting acetylation of histones: histone hyperacetylation is required for histone replacement during the transition from round to elongating spermatids. Component of a SWR1-like complex that specifically mediates the removal of histone H2A.Z/H2AZ1 from the nucleosome. Also acetylates non-histone proteins, such as BMAL1, ATM, AURKB, CHKA, CGAS, ERCC4/XPF, LPIN1, TP53/p53, NDC80/HEC1, NR1D2, RAN, SOX4, FOXP3, SQSTM1, ULK1 and RUBCNL/Pacer. Directly acetylates and activates ATM. Promotes nucleotide excision repair (NER) by mediating acetylation of ERCC4/XPF, thereby promoting formation of the ERCC4-ERCC1 complex. Relieves NR1D2-mediated inhibition of APOC3 expression by acetylating NR1D2. Acts as a regulator of regulatory T-cells (Treg) by catalyzing FOXP3 acetylation, thereby promoting FOXP3 transcriptional repressor activity. Involved in skeletal myoblast differentiation by mediating acetylation of SOX4. Catalyzes acetylation of APBB1/FE65, increasing its transcription activator activity. Promotes transcription elongation during the activation phase of the circadian cycle by catalyzing acetylation of BMAL1, promoting elongation of circadian transcripts. Together with GSK3 (GSK3A or GSK3B), acts as a regulator of autophagy: phosphorylated at Ser-86 by GSK3 under starvation conditions, leading to activate acetyltransferase activity and promote acetylation of key autophagy regulators, such as ULK1 and RUBCNL/Pacer. Acts as a regulator of the cGAS-STING innate antiviral response by catalyzing acetylation the N-terminus of CGAS, thereby promoting CGAS DNA-binding and activation. Also regulates lipid metabolism by mediating acetylation of CHKA or LPIN1. Promotes lipolysis of lipid droplets following glucose deprivation by mediating acetylation of isoform 1 of CHKA, thereby promoting monomerization of CHKA and its conversion into a tyrosine-protein kinase. Acts as a regulator of fatty-acid-induced triacylglycerol synthesis by catalyzing acetylation of LPIN1, thereby promoting the synthesis of diacylglycerol. In addition to protein acetyltransferase, can use different acyl-CoA substrates, such as (2E)-butenoyl-CoA (crotonyl-CoA), S-lactoyl-CoA (lactyl-CoA) and 2-hydroxyisobutanoyl-CoA (2-hydroxyisobutyryl-CoA), and is able to mediate protein crotonylation, lactylation and 2-hydroxyisobutyrylation, respectively. Acts as a key regulator of chromosome segregation and kinetochore-microtubule attachment during mitosis by mediating acetylation or crotonylation of target proteins. Catalyzes acetylation of AURKB at kinetochores, increasing AURKB activity and promoting accurate chromosome segregation in mitosis. Acetylates RAN during mitosis, promoting microtubule assembly at mitotic chromosomes. Acetylates NDC80/HEC1 during mitosis, promoting robust kinetochore-microtubule attachment. Catalyzes crotonylation of MAPRE1/EB1, thereby ensuring accurate spindle positioning in mitosis. Catalyzes lactylation of NBN/NBS1 in response to DNA damage, thereby promoting DNA double-strand breaks (DSBs) via homologous recombination (HR). The polypeptide is Histone acetyltransferase KAT5 (Mus musculus (Mouse)).